Here is a 130-residue protein sequence, read N- to C-terminus: Small ribosomal subunit protein uS8 (130 aa).

This sequence belongs to the universal ribosomal protein uS8 family. Part of the 30S ribosomal subunit.

One of the primary rRNA binding proteins, it binds directly to 16S rRNA central domain where it helps coordinate assembly of the platform of the 30S subunit. This is Small ribosomal subunit protein uS8 from Methanotorris igneus (Methanococcus igneus).